The sequence spans 204 residues: Crossover junction endodeoxyribonuclease RuvC (204 aa).

Active-site residues include Asp-7, Glu-68, and Asp-141. Mg(2+)-binding residues include Asp-7, Glu-68, and Asp-141.

This sequence belongs to the RuvC family. In terms of assembly, homodimer which binds Holliday junction (HJ) DNA. The HJ becomes 2-fold symmetrical on binding to RuvC with unstacked arms; it has a different conformation from HJ DNA in complex with RuvA. In the full resolvosome a probable DNA-RuvA(4)-RuvB(12)-RuvC(2) complex forms which resolves the HJ. The cofactor is Mg(2+).

The protein localises to the cytoplasm. The catalysed reaction is Endonucleolytic cleavage at a junction such as a reciprocal single-stranded crossover between two homologous DNA duplexes (Holliday junction).. Its function is as follows. The RuvA-RuvB-RuvC complex processes Holliday junction (HJ) DNA during genetic recombination and DNA repair. Endonuclease that resolves HJ intermediates. Cleaves cruciform DNA by making single-stranded nicks across the HJ at symmetrical positions within the homologous arms, yielding a 5'-phosphate and a 3'-hydroxyl group; requires a central core of homology in the junction. The consensus cleavage sequence is 5'-(A/T)TT(C/G)-3'. Cleavage occurs on the 3'-side of the TT dinucleotide at the point of strand exchange. HJ branch migration catalyzed by RuvA-RuvB allows RuvC to scan DNA until it finds its consensus sequence, where it cleaves and resolves the cruciform DNA. This Clavibacter sepedonicus (Clavibacter michiganensis subsp. sepedonicus) protein is Crossover junction endodeoxyribonuclease RuvC.